Reading from the N-terminus, the 922-residue chain is MFLHSVNLWNLAFYVFMVFLATLGLWDVFFGFEENKCSMSYMFEYPEYQKIELPKKLTKRYPAYELYLYGEGSYAEEHKILPLTGIPVLFLPGNAGSYKQVRSIGSIALRKAEDIDFKYHFDFFSVNFNEELVALYGGSLQKQTKFVHECIKAILKLYKGQEFPPTSVAIIGHSMGGLVARALLTLKNFKQDLINLLVTQATPHVAPVMPLDRFITEFYMTVNNYWILNARHINLTTLSVAGGFRDYQVRSGLTFLPTLSHHTSALSVVTSAVPKTWVSTDHLSIVWCKQLQLTTIRAFFDLIDADTKQITQKSKKKLSVLNHHFIRHPAKQFEENPSIISDLTGTSMWVPVKVSRWSYVAYNESDKIYFAFPLANHRKVYTHAYCQSTMLDTNSWIFGCINSTSMCRQGVDLSWKAELLPTIKSLTLRLQDYPSLSHIVVYVPSVHGSKFVVDCEFFKKEARSIQLPVTHLFSFGLSSRKAIINTSGRYYNIELLNLGQIYQAFKVNVVSKCTGGKEEITSIYKLHIPWSYEDSLTIAQVPSSVDISLKLHVAQPENDSHVALLKMYTSSDCQYEVTIKTSFPQILGQVVRFHGGALPAYVVSSILLAYGGQLYSLLSTGFCLEYGTMLDKEAKPYKVDPFVIMIKFLLGYKWFKELWDAVLLPELDAIVLTSQSMCFPLVSLILFLFGTCTAYWSGLLSSASVQLLSSLWLALKRPAELPKDVKVMSPDLPVLTVVFLIISWTTCGALAILLSYLYYVFKVVHLQASLTTFKNNQPVNPKHSRRSEKKSNHHKDSAIQNPRLSANDAEDSLRMHSTVINLLTWVVLLSMPSLIYWSKNLRYYFKLNPDPCKPLAFLLIPAIAVLGNTHTVSIKSSKLLKTASQFPLPLAVGVIAFGSSHLYRVPCFVIIPLVFHSLCNFM.

Over 1 to 11 (MFLHSVNLWNL) the chain is Cytoplasmic. Residues 12-32 (AFYVFMVFLATLGLWDVFFGF) form a helical membrane-spanning segment. Residues 33–597 (EENKCSMSYM…GQVVRFHGGA (565 aa)) lie on the Lumenal side of the membrane. Residue Ser-174 is part of the active site. 3 N-linked (GlcNAc...) asparagine glycosylation sites follow: Asn-363, Asn-402, and Asn-558. The chain crosses the membrane as a helical span at residues 598–618 (LPAYVVSSILLAYGGQLYSLL). Residues 619–641 (STGFCLEYGTMLDKEAKPYKVDP) lie on the Cytoplasmic side of the membrane. A helical transmembrane segment spans residues 642-662 (FVIMIKFLLGYKWFKELWDAV). Residues 663–668 (LLPELD) are Lumenal-facing. A helical transmembrane segment spans residues 669 to 689 (AIVLTSQSMCFPLVSLILFLF). Residues 690–694 (GTCTA) are Cytoplasmic-facing. A helical transmembrane segment spans residues 695–715 (YWSGLLSSASVQLLSSLWLAL). At 716 to 733 (KRPAELPKDVKVMSPDLP) the chain is on the lumenal side. Residues 734–754 (VLTVVFLIISWTTCGALAILL) form a helical membrane-spanning segment. Over 755–816 (SYLYYVFKVV…NDAEDSLRMH (62 aa)) the chain is Cytoplasmic. The tract at residues 776–801 (NQPVNPKHSRRSEKKSNHHKDSAIQN) is disordered. A compositionally biased stretch (basic residues) spans 782–793 (KHSRRSEKKSNH). The helical transmembrane segment at 817–837 (STVINLLTWVVLLSMPSLIYW) threads the bilayer. Over 838 to 853 (SKNLRYYFKLNPDPCK) the chain is Lumenal. A helical transmembrane segment spans residues 854-874 (PLAFLLIPAIAVLGNTHTVSI). Over 875-894 (KSSKLLKTASQFPLPLAVGV) the chain is Cytoplasmic. The chain crosses the membrane as a helical span at residues 895–915 (IAFGSSHLYRVPCFVIIPLVF). Residues 916-922 (HSLCNFM) lie on the Lumenal side of the membrane.

Belongs to the GPI inositol-deacylase family.

Its subcellular location is the endoplasmic reticulum membrane. Its function is as follows. GPI inositol-deacylase that catalyzes the remove of the acyl chain linked to the 2-OH position of inositol ring from the GPI-anchored protein (GPI-AP) in the endoplasmic reticulum. Initiates the post-attachment remodeling phase of GPI-AP biogenesis and participates in endoplasmic reticulum (ER)-to-Golgi transport of GPI-anchored protein. The sequence is that of GPI inositol-deacylase from Rattus norvegicus (Rat).